The chain runs to 28 residues: Short cationic peptide-1b (28 aa).

Glu-28 is modified (glutamic acid 1-amide).

In terms of tissue distribution, expressed by the venom gland.

Its subcellular location is the secreted. The polypeptide is Short cationic peptide-1b (Cupiennius salei (American wandering spider)).